The chain runs to 236 residues: 2-C-methyl-D-erythritol 4-phosphate cytidylyltransferase (236 aa).

The protein belongs to the IspD/TarI cytidylyltransferase family. IspD subfamily. Homodimer.

The enzyme catalyses 2-C-methyl-D-erythritol 4-phosphate + CTP + H(+) = 4-CDP-2-C-methyl-D-erythritol + diphosphate. It functions in the pathway isoprenoid biosynthesis; isopentenyl diphosphate biosynthesis via DXP pathway; isopentenyl diphosphate from 1-deoxy-D-xylulose 5-phosphate: step 2/6. Functionally, catalyzes the formation of 4-diphosphocytidyl-2-C-methyl-D-erythritol from CTP and 2-C-methyl-D-erythritol 4-phosphate (MEP). This chain is 2-C-methyl-D-erythritol 4-phosphate cytidylyltransferase, found in Salmonella paratyphi C (strain RKS4594).